Here is a 624-residue protein sequence, read N- to C-terminus: Chaperone protein HtpG (624 aa).

Residues 1–336 (MKGQETRGFQ…SNDLPLNVSR (336 aa)) are a; substrate-binding. Positions 337-552 (EILQDSTVTR…ADEMSTQMAK (216 aa)) are b. A c region spans residues 553–624 (LFAAAGQSVP…IRRMNQLLVS (72 aa)).

The protein belongs to the heat shock protein 90 family. In terms of assembly, homodimer.

It localises to the cytoplasm. Functionally, molecular chaperone. Has ATPase activity. This Salmonella paratyphi A (strain ATCC 9150 / SARB42) protein is Chaperone protein HtpG.